We begin with the raw amino-acid sequence, 88 residues long: Beta-insect excitatory toxin LqhIT1d (88 aa).

A signal peptide spans 1-18 (MKFFLLFLVVLPIMGVLG). The LCN-type CS-alpha/beta domain maps to 20–83 (KNGFAVDSNG…ISDTRKKLCD (64 aa)). Cystine bridges form between C34-C55, C40-C60, C44-C62, and C56-C82.

It belongs to the long (4 C-C) scorpion toxin superfamily. Sodium channel inhibitor family. Beta subfamily. In terms of tissue distribution, expressed by the venom gland.

The protein resides in the secreted. Functionally, excitatory insect toxins induce a spastic paralysis. They bind voltage-independently at site-4 of sodium channels (Nav) and shift the voltage of activation toward more negative potentials thereby affecting sodium channel activation and promoting spontaneous and repetitive firing. The polypeptide is Beta-insect excitatory toxin LqhIT1d (Leiurus hebraeus (Hebrew deathstalker scorpion)).